The chain runs to 583 residues: Threonine--tRNA ligase (583 aa).

Residues 185 to 478 (DHRKLGRELD…LVEHYGGAFP (294 aa)) are catalytic. The Zn(2+) site is built by C278, H329, and H455.

This sequence belongs to the class-II aminoacyl-tRNA synthetase family. In terms of assembly, homodimer. It depends on Zn(2+) as a cofactor.

The protein resides in the cytoplasm. It carries out the reaction tRNA(Thr) + L-threonine + ATP = L-threonyl-tRNA(Thr) + AMP + diphosphate + H(+). Functionally, catalyzes the attachment of threonine to tRNA(Thr) in a two-step reaction: L-threonine is first activated by ATP to form Thr-AMP and then transferred to the acceptor end of tRNA(Thr). Also edits incorrectly charged L-seryl-tRNA(Thr). The chain is Threonine--tRNA ligase from Borrelia turicatae (strain 91E135).